The primary structure comprises 798 residues: uncharacterized protein (798 aa).

An N-terminal signal peptide occupies residues 1–22 (MKFKYGAIVFSGLLGVSAILAA). Residue Cys-23 is the site of N-palmitoyl cysteine attachment. Residue Cys-23 is the site of S-diacylglycerol cysteine attachment. Over residues 178-192 (SKGAQKDNKSAEVQR) the composition is skewed to basic and acidic residues. 4 disordered regions span residues 178–204 (SKGAQKDNKSAEVQRKSTGQKTVTQPL), 226–260 (NGKKKEEKKSTRSKRATEGTQTTKENTGGDAATSD), 443–463 (EVNAPESNNGNDGKQQGQSDQ), and 478–515 (SDIKVKPKTQAESKKSSDSKQTANTGKGSNSKQQTPKK). Polar residues predominate over residues 193-204 (KSTGQKTVTQPL). Residues 226–235 (NGKKKEEKKS) show a composition bias toward basic and acidic residues. The segment covering 478–495 (SDIKVKPKTQAESKKSSD) has biased composition (basic and acidic residues). Polar residues predominate over residues 496–515 (SKQTANTGKGSNSKQQTPKK).

The protein belongs to the MG185/MG260 family.

It localises to the cell membrane. This is an uncharacterized protein from Mycoplasma pneumoniae (strain ATCC 29342 / M129 / Subtype 1) (Mycoplasmoides pneumoniae).